The following is a 108-amino-acid chain: Large ribosomal subunit protein uL22 (108 aa).

Belongs to the universal ribosomal protein uL22 family. As to quaternary structure, part of the 50S ribosomal subunit.

This protein binds specifically to 23S rRNA; its binding is stimulated by other ribosomal proteins, e.g. L4, L17, and L20. It is important during the early stages of 50S assembly. It makes multiple contacts with different domains of the 23S rRNA in the assembled 50S subunit and ribosome. Functionally, the globular domain of the protein is located near the polypeptide exit tunnel on the outside of the subunit, while an extended beta-hairpin is found that lines the wall of the exit tunnel in the center of the 70S ribosome. This chain is Large ribosomal subunit protein uL22, found in Desulfatibacillum aliphaticivorans.